The sequence spans 274 residues: HTH-type transcriptional regulator GadX (274 aa).

The HTH araC/xylS-type domain maps to 145–242; that stretch reads TRVCTVINNN…GMTPTEYQER (98 aa). DNA-binding regions (H-T-H motif) lie at residues 162–183 and 209–232; these read ARIA…REEE and IKRV…RNYY.

Homodimer.

Functionally, positively regulates the expression of about fifteen genes involved in acid resistance such as gadA, gadB and gadC. Depending on the conditions (growth phase and medium), can repress gadW. This is HTH-type transcriptional regulator GadX (gadX) from Shigella flexneri.